The sequence spans 357 residues: Naringenin,2-oxoglutarate 3-dioxygenase (357 aa).

Residues 189–293 (CVDMDQKIVV…RLSIATFQNP (105 aa)) enclose the Fe2OG dioxygenase domain. Residues His-216, Asp-218, and His-274 each contribute to the Fe cation site. A 2-oxoglutarate-binding site is contributed by Arg-284.

This sequence belongs to the iron/ascorbate-dependent oxidoreductase family. Fe(2+) is required as a cofactor. It depends on L-ascorbate as a cofactor.

The enzyme catalyses a (2S)-flavan-4-one + 2-oxoglutarate + O2 = a (2R,3R)-dihydroflavonol + succinate + CO2. It participates in secondary metabolite biosynthesis; flavonoid biosynthesis. Catalyzes the 3-beta-hydroxylation of 2S-flavanones to 2R,3R-dihydroflavonols which are intermediates in the biosynthesis of flavonols, anthocyanidins, catechins and proanthocyanidins in plants. The chain is Naringenin,2-oxoglutarate 3-dioxygenase (FHT) from Matthiola incana (Common stock).